The following is a 379-amino-acid chain: UDP-4-amino-4-deoxy-L-arabinose--oxoglutarate aminotransferase (379 aa).

Lys182 carries the post-translational modification N6-(pyridoxal phosphate)lysine.

This sequence belongs to the DegT/DnrJ/EryC1 family. ArnB subfamily. In terms of assembly, homodimer. Requires pyridoxal 5'-phosphate as cofactor.

It carries out the reaction UDP-4-amino-4-deoxy-beta-L-arabinose + 2-oxoglutarate = UDP-beta-L-threo-pentopyranos-4-ulose + L-glutamate. It participates in nucleotide-sugar biosynthesis; UDP-4-deoxy-4-formamido-beta-L-arabinose biosynthesis; UDP-4-deoxy-4-formamido-beta-L-arabinose from UDP-alpha-D-glucuronate: step 2/3. The protein operates within bacterial outer membrane biogenesis; lipopolysaccharide biosynthesis. In terms of biological role, catalyzes the conversion of UDP-4-keto-arabinose (UDP-Ara4O) to UDP-4-amino-4-deoxy-L-arabinose (UDP-L-Ara4N). The modified arabinose is attached to lipid A and is required for resistance to polymyxin and cationic antimicrobial peptides. The sequence is that of UDP-4-amino-4-deoxy-L-arabinose--oxoglutarate aminotransferase from Klebsiella pneumoniae subsp. pneumoniae (strain ATCC 700721 / MGH 78578).